A 471-amino-acid chain; its full sequence is Cleavage and polyadenylation specificity factor subunit 7 (471 aa).

The tract at residues 34–68 (VLTAASQPSDDRSSSTEPPPPVRQEPAPKPNNKTP) is disordered. Over residues 50–62 (EPPPPVRQEPAPK) the composition is skewed to pro residues. Residues 82-162 (AAVYVGSFSW…EKVDVRPATR (81 aa)) enclose the RRM domain. The segment at 176–220 (ECVRVPRGGIPPRAHSRDSSDSADGRATPSENLVPSSARVDKPPS) is disordered. Positions 190-199 (HSRDSSDSAD) are enriched in basic and acidic residues. Threonine 203 is subject to Phosphothreonine. Phosphoserine is present on serine 205. Residue lysine 354 forms a Glycyl lysine isopeptide (Lys-Gly) (interchain with G-Cter in SUMO2) linkage. The tract at residues 409-471 (SVGASGSSSR…HRDRERDRHH (63 aa)) is disordered. Phosphoserine occurs at positions 413 and 423. The tract at residues 418–469 (RKRHRSRERSPSRSRESSRRHRDLLHNEDRHDDYFQERNREHERHRDRERDR) is arg/Ser-rich domain. Composition is skewed to basic and acidic residues over residues 425–434 (ERSPSRSRES) and 441–471 (LLHN…DRHH).

The protein belongs to the RRM CPSF6/7 family. In terms of assembly, component of the cleavage factor Im (CFIm) complex which is a heterotetramer composed of two subunits of NUDT21/CPSF5 and two subunits of CPSF6 or CPSF7 or a heterodimer of CPSF6 and CPSF7. The cleavage factor Im (CFIm) complex associates with the CPSF and CSTF complexes to promote the assembly of the core mRNA 3'-processing machinery. Interacts with NUDT21/CPSF5. Interacts (via Arg/Ser-rich domain) with FIP1L1 (preferentially via unphosphorylated form and Arg/Glu/Asp-rich region); this interaction mediates, at least in part, the interaction between the CFIm and CPSF complexes and may be inhibited by CPSF7 hyper-phosphorylation. Phosphorylated. Post-translationally, asymmetrically dimethylated on arginine residues by PRMT1.

Its subcellular location is the nucleus. The protein localises to the cytoplasm. Component of the cleavage factor Im (CFIm) complex that functions as an activator of the pre-mRNA 3'-end cleavage and polyadenylation processing required for the maturation of pre-mRNA into functional mRNAs. CFIm contributes to the recruitment of multiprotein complexes on specific sequences on the pre-mRNA 3'-end, so called cleavage and polyadenylation signals (pA signals). Most pre-mRNAs contain multiple pA signals, resulting in alternative cleavage and polyadenylation (APA) producing mRNAs with variable 3'-end formation. The CFIm complex acts as a key regulator of cleavage and polyadenylation site choice during APA through its binding to 5'-UGUA-3' elements localized in the 3'-untranslated region (UTR) for a huge number of pre-mRNAs. CPSF7 activates directly the mRNA 3'-processing machinery. Binds to pA signals in RNA substrates. The protein is Cleavage and polyadenylation specificity factor subunit 7 of Mus musculus (Mouse).